Reading from the N-terminus, the 738-residue chain is Coiled-coil domain-containing protein 142 (738 aa).

Positions 1 to 34 (MARASSSSGPLPPLANVPSSWAQPVGAGEERDEG) are disordered. Positions 69-92 (ALQRLRATLLRLHREREQLLRARD) form a coiled coil. Residues 682–704 (LSTLGGGGRGGGGGGGPGPSPEA) form a disordered region. Over residues 685–698 (LGGGGRGGGGGGGP) the composition is skewed to gly residues.

This chain is Coiled-coil domain-containing protein 142 (Ccdc142), found in Mus musculus (Mouse).